A 1446-amino-acid polypeptide reads, in one-letter code: Bud site selection protein 4 (1446 aa).

Disordered regions lie at residues 69 to 103 (NQWN…TNLL), 358 to 385 (VSEE…NPSS), 425 to 446 (DNNI…SGKE), 495 to 525 (ASED…QNLE), 823 to 844 (SSSL…SQAF), and 1025 to 1044 (KKNT…RVSS). Positions 86 to 98 (NYDDDEEQGDESD) are enriched in acidic residues. Composition is skewed to polar residues over residues 425 to 434 (DNNISKSAND) and 495 to 524 (ASED…QQNL). Residues 1028–1044 (TQKDLKDGTTAEKRVSS) are compositionally biased toward basic and acidic residues. The PH domain maps to 1314–1425 (DITKEGYLLQ…WYMKLKEVVE (112 aa)).

Belongs to the BUD4 family.

It localises to the bud neck. Functionally, required for selection of future bud sites. Cooperates with other bud site selection proteins to recognize a spatial landmark during mitosis and they subsequently become a landmark for downstream polarity establishment factors that coordinate budding and cytokinesis. Involved in the septin organization at the bud neck. The sequence is that of Bud site selection protein 4 (BUD4) from Candida glabrata (strain ATCC 2001 / BCRC 20586 / JCM 3761 / NBRC 0622 / NRRL Y-65 / CBS 138) (Yeast).